The sequence spans 235 residues: Ribonuclease 3 (235 aa).

One can recognise an RNase III domain in the interval 6–131; sequence IDQLERLTEH…LIAVMYLDGG (126 aa). E44 is a Mg(2+) binding site. D48 is an active-site residue. The Mg(2+) site is built by D117 and E120. E120 is an active-site residue. The DRBM domain maps to 156 to 225; that stretch reads DAKTELQEWA…AEKVLRREGI (70 aa).

The protein belongs to the ribonuclease III family. In terms of assembly, homodimer. Requires Mg(2+) as cofactor.

The protein localises to the cytoplasm. The catalysed reaction is Endonucleolytic cleavage to 5'-phosphomonoester.. Its function is as follows. Digests double-stranded RNA. Involved in the processing of primary rRNA transcript to yield the immediate precursors to the large and small rRNAs (23S and 16S). Processes some mRNAs, and tRNAs when they are encoded in the rRNA operon. Processes pre-crRNA and tracrRNA of type II CRISPR loci if present in the organism. The protein is Ribonuclease 3 of Bartonella quintana (strain Toulouse) (Rochalimaea quintana).